The chain runs to 31 residues: Small protein MgtS (31 aa).

The Periplasmic segment spans residues 1-4 (MLGN). Residues 5–25 (MNVFMAVLGIILFSGFLAAYF) traverse the membrane as a helical segment. Over 26–31 (SHKWDD) the chain is Cytoplasmic.

Interacts with MgtA.

Its subcellular location is the cell inner membrane. Functionally, modulates intracellular Mg(2+) levels to maintain cellular integrity upon Mg(2+) limitation. Acts by binding and stabilizing the Mg(2+) transporter MgtA, thereby leading to increased intracellular level of Mg(2+). May inhibit FtsH proteolysis of MgtA. This chain is Small protein MgtS, found in Escherichia coli (strain K12).